The primary structure comprises 164 residues: Anterior gradient protein 2 (164 aa).

Positions 1–20 are cleaved as a signal peptide; sequence METVLKTLFVLLVATSLTLA. 2 consecutive short sequence motifs (homodimer stabilization; interchain) follow at residues 34–43 and 49–56; these read SRGWGDNLEW and EGLYKAKT.

It belongs to the AGR family. In terms of assembly, monomer and homodimer.

It is found in the secreted. The protein localises to the endoplasmic reticulum. In Xenopus tropicalis (Western clawed frog), this protein is Anterior gradient protein 2.